Reading from the N-terminus, the 271-residue chain is Formamidopyrimidine-DNA glycosylase (271 aa).

The active-site Schiff-base intermediate with DNA is the Pro-2. The active-site Proton donor is Glu-3. Lys-58 serves as the catalytic Proton donor; for beta-elimination activity. Residues His-92, Arg-111, and Arg-152 each contribute to the DNA site. The segment at 237-271 (FVYGRQQQPCKQCGSLLRQTTIRQRTTVWCGHCQG) adopts an FPG-type zinc-finger fold. Arg-261 functions as the Proton donor; for delta-elimination activity in the catalytic mechanism.

This sequence belongs to the FPG family. In terms of assembly, monomer. It depends on Zn(2+) as a cofactor.

It catalyses the reaction Hydrolysis of DNA containing ring-opened 7-methylguanine residues, releasing 2,6-diamino-4-hydroxy-5-(N-methyl)formamidopyrimidine.. The enzyme catalyses 2'-deoxyribonucleotide-(2'-deoxyribose 5'-phosphate)-2'-deoxyribonucleotide-DNA = a 3'-end 2'-deoxyribonucleotide-(2,3-dehydro-2,3-deoxyribose 5'-phosphate)-DNA + a 5'-end 5'-phospho-2'-deoxyribonucleoside-DNA + H(+). Its function is as follows. Involved in base excision repair of DNA damaged by oxidation or by mutagenic agents. Acts as a DNA glycosylase that recognizes and removes damaged bases. Has a preference for oxidized purines, such as 7,8-dihydro-8-oxoguanine (8-oxoG). Has AP (apurinic/apyrimidinic) lyase activity and introduces nicks in the DNA strand. Cleaves the DNA backbone by beta-delta elimination to generate a single-strand break at the site of the removed base with both 3'- and 5'-phosphates. This Xylella fastidiosa (strain 9a5c) protein is Formamidopyrimidine-DNA glycosylase (mutM1).